A 162-amino-acid polypeptide reads, in one-letter code: Small ribosomal subunit protein uS9 (162 aa).

Belongs to the universal ribosomal protein uS9 family.

The chain is Small ribosomal subunit protein uS9 from Methylobacterium sp. (strain 4-46).